The chain runs to 166 residues: Calmodulin-like protein 5 (166 aa).

EF-hand domains are found at residues 11 to 46 (EQVA…LGQT), 47 to 82 (PTRE…KASR), 96 to 131 (AADE…LGEK), and 132 to 166 (LTDE…LSDQ). The Ca(2+) site is built by D24, D26, D28, C30, E35, D60, D62, N64, T66, E71, D109, D111, D113, and E120. K131 is modified (N6,N6,N6-trimethyllysine). Residues D145, D147, D149, Q151, and E156 each contribute to the Ca(2+) site.

It belongs to the calmodulin family.

Its function is as follows. Potential calcium sensor. This Oryza sativa subsp. japonica (Rice) protein is Calmodulin-like protein 5 (CML5).